The following is a 202-amino-acid chain: Transmembrane 4 L6 family member 1 (202 aa).

Residues 1 to 9 (MCSSKCTRY) lie on the Cytoplasmic side of the membrane. Residues 10–30 (IGHSLVVFAVLCIVANILLYF) form a helical membrane-spanning segment. Residues 31–49 (PNGETKYAYEDHLSRFVWF) lie on the Extracellular side of the membrane. A helical membrane pass occupies residues 50 to 70 (FAGIVGGGLLILLPAFVFLGL). Topologically, residues 71–93 (EGEDCCGCWSCENYGKRCTMLSS) are cytoplasmic. Residues 94 to 114 (IMAALIGIAGSGYCVIVAALG) form a helical membrane-spanning segment. Residues 115–161 (LAEGPKCGDSHGMWNYTFANTDGQYLLDPTTWSKCHEPNNIVEWNVT) are Extracellular-facing. Asparagine 129 and asparagine 159 each carry an N-linked (GlcNAc...) asparagine glycan. The chain crosses the membrane as a helical span at residues 162–182 (LFSILLALGGLEFILCLIQVI). Residues 183–202 (NGVLEGMCSYCCSHQQQYDC) are Cytoplasmic-facing.

This sequence belongs to the L6 tetraspanin family. In terms of assembly, present in high molecular weight complexes in tumor cells. Interacts with SDCBP2.

It localises to the membrane. This is Transmembrane 4 L6 family member 1 (TM4SF1) from Mesocricetus auratus (Golden hamster).